A 610-amino-acid chain; its full sequence is Prolactin receptor (610 aa).

A signal peptide spans 1-19; it reads MPSALAFVLLVLNISLLKG. The Extracellular segment spans residues 20–229; sequence QSPPGKPEIH…EMPNDFTLKD (210 aa). 2 consecutive Fibronectin type-III domains span residues 22 to 122 and 124 to 224; these read PPGK…IVEP and PPRN…MPND. C31 and C41 are disulfide-bonded. A glycan (N-linked (GlcNAc...) asparagine) is linked at N54. A disulfide bond links C70 and C81. N-linked (GlcNAc...) asparagine glycosylation is found at N99 and N127. D206 and H207 together coordinate Zn(2+). A WSXWS motif motif is present at residues 210–214; sequence WSRWS. A helical transmembrane segment spans residues 230–253; it reads TTVWIIVAILSAVICLIMVWAVAL. Topologically, residues 254 to 610 are cytoplasmic; that stretch reads KGYSMMTCIF…DPTCFMHSFH (357 aa). Residues 262–270 carry the Box 1 motif motif; that stretch reads IFPPVPGPK. Disordered regions lie at residues 317 to 355, 458 to 482, and 564 to 584; these read DERL…HSLL, TGEE…TPWP, and AKKA…ASFT. Residues 318–327 are compositionally biased toward basic and acidic residues; sequence ERLMPSHSKE. The segment covering 345–354 has biased composition (low complexity); sequence GHGSYDSHSL.

Belongs to the type I cytokine receptor family. Type 1 subfamily. In terms of assembly, interacts with SMARCA1. Interacts with NEK3 and VAV2 and this interaction is prolactin-dependent.

It localises to the membrane. This is a receptor for the anterior pituitary hormone prolactin. This Rattus norvegicus (Rat) protein is Prolactin receptor (Prlr).